The chain runs to 766 residues: Transcription factor GTE4 (766 aa).

Disordered regions lie at residues 87-108 (GTNS…PGDD), 234-262 (RDTT…PMEE), and 388-412 (GDKL…GDVG). The span at 238–250 (DAQQPAGLTSDSA) shows a compositional bias: polar residues. The region spanning 416–522 (GAGTKVFKNC…QIFEERWAVI (107 aa)) is the Bromo domain. 2 disordered regions span residues 544 to 606 (TMRS…NKRD) and 687 to 766 (ARAE…SDQT). A compositionally biased stretch (low complexity) spans 574–589 (PTTTPGRTPTSATPSG). The NET domain occupies 597–678 (PKANEPNKRD…NYKKGLSKKK (82 aa)). Residues 736-766 (SRSSSSSSSSSSSSSSDSDSDSSSSSGSDQT) are compositionally biased toward low complexity.

In terms of tissue distribution, ubiquitously expressed.

The protein localises to the nucleus. In terms of biological role, involved in the activation and maintenance of cell division in the meristems and by this controls cell numbers in differentiated organs. Its action in cell cycle regulation may be directed through the RB-E2F pathway. The sequence is that of Transcription factor GTE4 (GTE4) from Arabidopsis thaliana (Mouse-ear cress).